The sequence spans 618 residues: Sodium/iodide cotransporter (618 aa).

At 1–14 (MEGAEAGARATFGA) the chain is on the extracellular side. The chain crosses the membrane as a helical span at residues 15–31 (WDYGVFATMLLVSTGIG). The Cytoplasmic portion of the chain corresponds to 32–56 (LWVGLARGGQRSADDFFTGGRQLAA). A discontinuously helical transmembrane segment spans residues 57–80 (VPVGLSLAASFMSAVQVLGVPAEA). Na(+)-binding residues include Ser-69, Val-71, and Gln-72. Position 76 (Val-76) interacts with iodide. The Extracellular segment spans residues 81–84 (ARYG). Residues 85–105 (LKFLWMCAGQLLNSLLTAFLF) traverse the membrane as a helical segment. Met-90 serves as a coordination point for iodide. The Cytoplasmic portion of the chain corresponds to 106–130 (LPIFYRLGLTSTYQYLELRFSRAVR). The helical transmembrane segment at 131–157 (LCGTLQYLVATMLYTGIVIYAPALILN) threads the bilayer. Tyr-144 contributes to the Na(+) binding site. Over 158 to 163 (QVTGLD) the chain is Extracellular. Residues 164–181 (IWASLLSTGIICTLYTTV) form a helical membrane-spanning segment. The Cytoplasmic segment spans residues 182–189 (GGMKAVVW). A helical transmembrane segment spans residues 190–208 (TDVFQVVVMLVGFWVILAR). Topologically, residues 209-243 (GVILLGGPRNVLSLAQNHSRINLMDFDPDPRSRYT) are extracellular. The discontinuously helical transmembrane segment at 244–266 (FWTFIVGGTLVWLSMYGVNQAQV) threads the bilayer. Iodide is bound at residue Trp-255. A Na(+)-binding site is contributed by Met-258. At 267-278 (QRYVACHTEGKA) the chain is on the cytoplasmic side. Residues 279–301 (KLALLVNQLGLFLIVASAACCGI) form a helical membrane-spanning segment. Over 302–335 (VMFVYYKDCDPLLTGRISAPDQYMPLLVLDIFED) the chain is Extracellular. Residues 336–363 (LPGVPGLFLACAYSGTLSTASTSINAMA) form a helical membrane-spanning segment. Residues 364–386 (AVTVEDLIKPRMPGLAPRKLVFI) are Cytoplasmic-facing. The chain crosses the membrane as a helical span at residues 387 to 408 (SKGLSFIYGSACLTVAALSSLL). Topologically, residues 409–411 (GGG) are extracellular. Residues 412–437 (VLQGSFTVMGVISGPLLGAFTLGMLL) traverse the membrane as a helical segment. Leu-413 provides a ligand contact to iodide. The Na(+) site is built by Ser-416 and Phe-417. Phe-417 provides a ligand contact to iodide. At 438-441 (PACN) the chain is on the cytoplasmic side. The chain crosses the membrane as a helical span at residues 442 to 465 (TPGVLSGLAAGLAVSLWVAVGATL). Topologically, residues 466 to 520 (YPPGEQTMGVLPTSAAGCTNDSVLLGPPGATNASNGIPSSGMDTGRPALADTFYA) are extracellular. Asn-485 and Asn-497 each carry an N-linked (GlcNAc...) asparagine glycan. A helical membrane pass occupies residues 521 to 545 (ISYLYYGALGTLTTMLCGALISYLT). At 546–618 (GPTKRSSLGP…YLGHDVETNL (73 aa)) the chain is on the cytoplasmic side. Phosphoserine; by PKA is present on Ser-551. The disordered stretch occupies residues 587 to 618 (EDIPAVTKKPPGLKPGAETHPLYLGHDVETNL).

The protein belongs to the sodium:solute symporter (SSF) (TC 2.A.21) family. In terms of assembly, monomer.

It is found in the cell membrane. The protein localises to the cytoplasm. It catalyses the reaction iodide(out) + 2 Na(+)(out) = iodide(in) + 2 Na(+)(in). It carries out the reaction chlorate(out) + 2 Na(+)(out) = chlorate(in) + 2 Na(+)(in). The catalysed reaction is thiocyanate(out) + 2 Na(+)(out) = thiocyanate(in) + 2 Na(+)(in). The enzyme catalyses nitrate(out) + 2 Na(+)(out) = nitrate(in) + 2 Na(+)(in). It catalyses the reaction selenocyanate(out) + 2 Na(+)(out) = selenocyanate(in) + 2 Na(+)(in). Perchlorate inhibits iodide transport activity. Oxyanions inhibit iodide transport activity by blocking the binding sites for iodide and one of the sodium ions. In terms of biological role, sodium:iodide symporter that mediates the transport of iodide into the thyroid gland. Can also mediate the transport of chlorate, thiocynate, nitrate and selenocynate. This Rattus norvegicus (Rat) protein is Sodium/iodide cotransporter (Slc5a5).